A 198-amino-acid chain; its full sequence is Nucleoid occlusion factor SlmA (198 aa).

In terms of domain architecture, HTH tetR-type spans asparagine 10–leucine 70. The H-T-H motif DNA-binding region spans threonine 33 to phenylalanine 52. Residues glutamate 117–methionine 145 are a coiled coil.

This sequence belongs to the nucleoid occlusion factor SlmA family. In terms of assembly, homodimer. Interacts with FtsZ.

The protein resides in the cytoplasm. It localises to the nucleoid. Its function is as follows. Required for nucleoid occlusion (NO) phenomenon, which prevents Z-ring formation and cell division over the nucleoid. Acts as a DNA-associated cell division inhibitor that binds simultaneously chromosomal DNA and FtsZ, and disrupts the assembly of FtsZ polymers. SlmA-DNA-binding sequences (SBS) are dispersed on non-Ter regions of the chromosome, preventing FtsZ polymerization at these regions. The polypeptide is Nucleoid occlusion factor SlmA (Enterobacter sp. (strain 638)).